A 3471-amino-acid polypeptide reads, in one-letter code: Abnormal spindle-like microcephaly-associated protein homolog (3471 aa).

The segment at 1 to 26 (MANRRVGRGCWEVSPTERRPPAAEEE) is disordered. Phosphoserine is present on residues serine 274, serine 277, serine 361, serine 386, and serine 419. Polar residues predominate over residues 555-564 (EVTPSSTTAS). Residues 555–576 (EVTPSSTTASVARKRKSDGSME) form a disordered region. A Phosphoserine modification is found at serine 599. One can recognise a Calponin-homology (CH) 1 domain in the interval 914 to 1050 (KASKEILLAF…LLWKIAFAFQ (137 aa)). Residues 1051–1072 (VDISLNLDQLKEEIAFLKHTKS) are a coiled coil. Phosphoserine is present on serine 1097. Positions 1104 to 1255 (SENIKLLMDW…YLSFLCARLL (152 aa)) constitute a Calponin-homology (CH) 2 domain. 39 IQ domains span residues 1341–1372 (QNKA…IILQ), 1387–1416 (YLWA…MLKS), 1576–1607 (LKKT…VIIQ), 1599–1628 (MKKA…KTRS), 1626–1655 (TRSA…SVIK), 1649–1678 (ILTS…ATIK), 1722–1751 (MRES…AVIS), 1745–1776 (QRKA…IVIQ), 1795–1824 (VKKA…AALK), 1818–1847 (QSIA…SIIK), 1868–1897 (TKAA…AALK), 1891–1922 (EHQA…LVIQ), 1941–1972 (LRHA…IIIQ), 1964–1995 (QHKC…LLIQ), 2014–2043 (TKAA…AAVT), 2037–2068 (CNKA…IIIQ), 2087–2118 (LKKT…TFIK), 2110–2141 (MHRA…IVIQ), 2160–2191 (ILKA…TLIQ), 2183–2212 (MQIA…ITKT), 2233–2264 (LRHS…TLIQ), 2256–2287 (MHIA…IWIQ), 2305–2336 (VQNA…TFIQ), 2378–2409 (QRHS…TLIQ), 2401–2432 (MHSS…IFVQ), 2451–2482 (LRKS…VLIQ), 2524–2555 (QWHS…IIIQ), 2659–2690 (RTQA…TLIQ), 2682–2713 (MHRA…VVIQ), 2732–2761 (VQKS…EKMA), 2853–2884 (QKRA…VVLQ), 2903–2932 (IRSS…STIK), 2926–2957 (IKNS…KIQA), 2948–2979 (KVKA…KIIQ), 3023–3054 (RHRA…LVIQ), 3073–3104 (FKKS…RLLH), 3134–3163 (QVNS…SIKK), 3175–3204 (QNRA…GIIK), and 3198–3229 (FTSG…IRLS).

It localises to the cytoplasm. The protein localises to the cytoskeleton. It is found in the spindle. Its subcellular location is the nucleus. Functionally, probable role in mitotic spindle regulation and coordination of mitotic processes. May have a preferential role in regulating neurogenesis. The polypeptide is Abnormal spindle-like microcephaly-associated protein homolog (ASPM) (Pongo pygmaeus (Bornean orangutan)).